A 358-amino-acid chain; its full sequence is tRNA-specific 2-thiouridylase MnmA 2 (358 aa).

Residues Gly-11–Ser-18 and Met-37 contribute to the ATP site. Cys-106 serves as the catalytic Nucleophile. An intrachain disulfide couples Cys-106 to Cys-202. Residue Gly-130 participates in ATP binding. Residues Lys-152–Gln-154 are interaction with tRNA. The Cysteine persulfide intermediate role is filled by Cys-202. The interval Arg-308–Tyr-309 is interaction with tRNA.

Belongs to the MnmA/TRMU family.

It localises to the cytoplasm. The enzyme catalyses S-sulfanyl-L-cysteinyl-[protein] + uridine(34) in tRNA + AH2 + ATP = 2-thiouridine(34) in tRNA + L-cysteinyl-[protein] + A + AMP + diphosphate + H(+). Catalyzes the 2-thiolation of uridine at the wobble position (U34) of tRNA, leading to the formation of s(2)U34. The protein is tRNA-specific 2-thiouridylase MnmA 2 of Clostridium tetani (strain Massachusetts / E88).